The sequence spans 318 residues: tRNA uridine(34) hydroxylase (318 aa).

Residues 123–217 enclose the Rhodanese domain; the sequence is EDDDTVIIDA…YGKDPETKGE (95 aa). Residue cysteine 177 is the Cysteine persulfide intermediate of the active site.

It belongs to the TrhO family.

It carries out the reaction uridine(34) in tRNA + AH2 + O2 = 5-hydroxyuridine(34) in tRNA + A + H2O. Functionally, catalyzes oxygen-dependent 5-hydroxyuridine (ho5U) modification at position 34 in tRNAs. This chain is tRNA uridine(34) hydroxylase, found in Staphylococcus aureus (strain MSSA476).